A 337-amino-acid polypeptide reads, in one-letter code: MNFKYSILFICFVKVLDNCYAADDLTTLRNGTLDRGITPDCTFNEKDIELHVYSRDKRNGIILKKEILKNYDLFQKSQISHQIAILIHGFLSTGNNENFDAMAKALIEIDNFLVISVDWKKGACNAFASTNDVLGYSQAVGNTRHVGKYVADFTKLLVEQYKVPMSNIRLIGHSLGAHTSGFAGKEVQRLKLGKYKEIIGLDPAGPSFLTNKCPNRLCETDAEYVQAIHTSAILGVYYNVGSVDFYVNYGKSQPGCSEPSCSHTKAVKYLTECIKRECCLIGTPWKSYFSTPKPISQCKRDTCVCVGLNAQSYPAKGSFYVPVDKDAPYCHNEGIKL.

Positions 1-21 are cleaved as a signal peptide; it reads MNFKYSILFICFVKVLDNCYA. Positions 22-35 are excised as a propeptide; the sequence is ADDLTTLRNGTLDR. C41 and C124 form a disulfide bridge. The active-site Nucleophile is the S174. Catalysis depends on D202, which acts as the Charge relay system. Intrachain disulfides connect C213-C218 and C256-C261. Residue H263 is the Charge relay system of the active site. Disulfide bonds link C278–C305, C279–C330, and C298–C303.

This sequence belongs to the AB hydrolase superfamily. Lipase family. As to expression, expressed by the venom gland.

Its subcellular location is the secreted. The enzyme catalyses a 1,2-diacyl-sn-glycero-3-phosphocholine + H2O = a 2-acyl-sn-glycero-3-phosphocholine + a fatty acid + H(+). Functionally, catalyzes the hydrolysis of phosphatidylcholine with phospholipase A1 activity. May act as an allergen and induce hemolytic activity. This chain is Phospholipase A1 1, found in Polistes dominula (European paper wasp).